A 391-amino-acid polypeptide reads, in one-letter code: Elongation factor Tu (391 aa).

A tr-type G domain is found at 10 to 201 (KPHVNIGTIG…AVDAYIPTPE (192 aa)). The G1 stretch occupies residues 19 to 26 (GHVDHGKT). 19–26 (GHVDHGKT) contributes to the GTP binding site. T26 serves as a coordination point for Mg(2+). Positions 55–59 (GITIS) are G2. Residues 76 to 79 (DCPG) are G3. GTP contacts are provided by residues 76–80 (DCPGH) and 131–134 (NKVD). Residues 131–134 (NKVD) are G4. The tract at residues 169-171 (SAL) is G5.

The protein belongs to the TRAFAC class translation factor GTPase superfamily. Classic translation factor GTPase family. EF-Tu/EF-1A subfamily. Monomer.

The protein resides in the cytoplasm. It carries out the reaction GTP + H2O = GDP + phosphate + H(+). In terms of biological role, GTP hydrolase that promotes the GTP-dependent binding of aminoacyl-tRNA to the A-site of ribosomes during protein biosynthesis. This Rhizobium meliloti (strain 1021) (Ensifer meliloti) protein is Elongation factor Tu.